An 820-amino-acid chain; its full sequence is Phenylalanine--tRNA ligase beta subunit (820 aa).

Residues 42 to 154 (KGGLEGLVIG…EDAVPGTLAK (113 aa)) enclose the tRNA-binding domain. The region spanning 413-489 (AQDFIVELTY…RIYGYNNVEI (77 aa)) is the B5 domain. Mg(2+)-binding residues include aspartate 467, aspartate 473, glutamate 476, and aspartate 477. In terms of domain architecture, FDX-ACB spans 727–820 (SKFPAVKRDL…LEDKLGAKLR (94 aa)).

Belongs to the phenylalanyl-tRNA synthetase beta subunit family. Type 1 subfamily. In terms of assembly, tetramer of two alpha and two beta subunits. Mg(2+) serves as cofactor.

Its subcellular location is the cytoplasm. It carries out the reaction tRNA(Phe) + L-phenylalanine + ATP = L-phenylalanyl-tRNA(Phe) + AMP + diphosphate + H(+). The polypeptide is Phenylalanine--tRNA ligase beta subunit (Bacteroides fragilis (strain YCH46)).